A 268-amino-acid polypeptide reads, in one-letter code: Thiazole synthase (268 aa).

The active-site Schiff-base intermediate with DXP is the Lys108. 1-deoxy-D-xylulose 5-phosphate contacts are provided by residues Gly169, 195–196 (AG), and 217–218 (NS). Residues 248-268 (RLKENPLASPSSPLEGVISNN) are disordered. Residues 255–268 (ASPSSPLEGVISNN) are compositionally biased toward polar residues.

Belongs to the ThiG family. As to quaternary structure, homotetramer. Forms heterodimers with either ThiH or ThiS.

Its subcellular location is the cytoplasm. The catalysed reaction is [ThiS sulfur-carrier protein]-C-terminal-Gly-aminoethanethioate + 2-iminoacetate + 1-deoxy-D-xylulose 5-phosphate = [ThiS sulfur-carrier protein]-C-terminal Gly-Gly + 2-[(2R,5Z)-2-carboxy-4-methylthiazol-5(2H)-ylidene]ethyl phosphate + 2 H2O + H(+). The protein operates within cofactor biosynthesis; thiamine diphosphate biosynthesis. Its function is as follows. Catalyzes the rearrangement of 1-deoxy-D-xylulose 5-phosphate (DXP) to produce the thiazole phosphate moiety of thiamine. Sulfur is provided by the thiocarboxylate moiety of the carrier protein ThiS. In vitro, sulfur can be provided by H(2)S. This is Thiazole synthase from Prochlorococcus marinus (strain NATL1A).